A 388-amino-acid chain; its full sequence is Succinate--CoA ligase [ADP-forming] subunit beta (388 aa).

One can recognise an ATP-grasp domain in the interval 9–244; sequence KQLFAEYGLP…PSQDDPREAH (236 aa). Residues lysine 46, 53–55, glutamate 99, threonine 102, and glutamate 107 each bind ATP; that span reads GRG. 2 residues coordinate Mg(2+): asparagine 199 and aspartate 213. Substrate is bound by residues asparagine 264 and 321 to 323; that span reads GIV.

This sequence belongs to the succinate/malate CoA ligase beta subunit family. As to quaternary structure, heterotetramer of two alpha and two beta subunits. It depends on Mg(2+) as a cofactor.

The catalysed reaction is succinate + ATP + CoA = succinyl-CoA + ADP + phosphate. It carries out the reaction GTP + succinate + CoA = succinyl-CoA + GDP + phosphate. It functions in the pathway carbohydrate metabolism; tricarboxylic acid cycle; succinate from succinyl-CoA (ligase route): step 1/1. Succinyl-CoA synthetase functions in the citric acid cycle (TCA), coupling the hydrolysis of succinyl-CoA to the synthesis of either ATP or GTP and thus represents the only step of substrate-level phosphorylation in the TCA. The beta subunit provides nucleotide specificity of the enzyme and binds the substrate succinate, while the binding sites for coenzyme A and phosphate are found in the alpha subunit. In Ectopseudomonas mendocina (strain ymp) (Pseudomonas mendocina), this protein is Succinate--CoA ligase [ADP-forming] subunit beta.